Reading from the N-terminus, the 486-residue chain is Betaine aldehyde dehydrogenase (486 aa).

K(+) contacts are provided by Thr23 and Asp90. Residue 147 to 149 (GAW) participates in NAD(+) binding. Lys159 serves as the catalytic Charge relay system. NAD(+) is bound by residues 173–176 (KPSE) and 226–229 (ESGT). A K(+)-binding site is contributed by Leu241. Glu247 functions as the Proton acceptor in the catalytic mechanism. 3 residues coordinate NAD(+): Gly249, Cys281, and Glu382. Cys281 (nucleophile) is an active-site residue. Cysteine sulfenic acid (-SOH) is present on Cys281. K(+) contacts are provided by Lys452 and Gly455. Glu459 acts as the Charge relay system in catalysis.

Belongs to the aldehyde dehydrogenase family. Dimer of dimers. Requires K(+) as cofactor.

The enzyme catalyses betaine aldehyde + NAD(+) + H2O = glycine betaine + NADH + 2 H(+). It participates in amine and polyamine biosynthesis; betaine biosynthesis via choline pathway; betaine from betaine aldehyde: step 1/1. Involved in the biosynthesis of the osmoprotectant glycine betaine. Catalyzes the irreversible oxidation of betaine aldehyde to the corresponding acid. The protein is Betaine aldehyde dehydrogenase of Vibrio campbellii (strain ATCC BAA-1116).